Here is a 473-residue protein sequence, read N- to C-terminus: 3-isopropylmalate dehydratase large subunit (473 aa).

[4Fe-4S] cluster-binding residues include Cys-354, Cys-414, and Cys-417.

Belongs to the aconitase/IPM isomerase family. LeuC type 1 subfamily. In terms of assembly, heterodimer of LeuC and LeuD. It depends on [4Fe-4S] cluster as a cofactor.

The enzyme catalyses (2R,3S)-3-isopropylmalate = (2S)-2-isopropylmalate. The protein operates within amino-acid biosynthesis; L-leucine biosynthesis; L-leucine from 3-methyl-2-oxobutanoate: step 2/4. Functionally, catalyzes the isomerization between 2-isopropylmalate and 3-isopropylmalate, via the formation of 2-isopropylmaleate. This Rhodopseudomonas palustris (strain BisB18) protein is 3-isopropylmalate dehydratase large subunit.